The following is a 325-amino-acid chain: Secreted RxLR effector protein RXLR-C07 (325 aa).

Positions 1–19 (MQGVRITILWCIVLATIYA) are cleaved as a signal peptide. TPR repeat units follow at residues 37-75 (RGLRNAGMKANDERMFKDAIEKLRHAISLLHNRVFGEER), 92-125 (AQILNDYGSVLIRTKQYDEAIEVLEDSVAMIEKI), 134-167 (GLSLRSLADAYMEKKAFKSAIKRYKTLRKHVKKG), 218-251 (AELYMELSSAHVEVGEIDDALRAAETASAIFLQR), and 260-293 (AFSLNALAGVKMQQKKVDEAIDLLDRAHNIAVSI). The RxLR-dEER motif lies at 37–75 (RGLRNAGMKANDERMFKDAIEKLRHAISLLHNRVFGEER).

It belongs to the RxLR effector family.

The protein localises to the secreted. The protein resides in the host cytoplasm. Its subcellular location is the host nucleus. It is found in the host nucleolus. Secreted effector that suppresses pattern-triggered immunity (PTI) in plant host. This chain is Secreted RxLR effector protein RXLR-C07, found in Plasmopara halstedii (Downy mildew of sunflower).